The primary structure comprises 354 residues: NADH-quinone oxidoreductase subunit H (354 aa).

A run of 8 helical transmembrane segments spans residues 25–45, 91–111, 126–146, 170–190, 205–225, 253–273, 290–310, and 330–350; these read LVRILVVAVVILLCVAYLILW, WLYLIAPVMTVVPAFAVWAVI, LLYAMAISSIGVYAVILAGWA, MGFALVLVLMTAGSLNLSEIV, FLSWNWLPLLPVFVIYFISGI, MAFALFFLAEYINMIVISALA, FIPGIFWLVLKVFALLSVFIW, and VFLPVCVFWVIVVGFWMMSPL.

The protein belongs to the complex I subunit 1 family. NDH-1 is composed of 14 different subunits. Subunits NuoA, H, J, K, L, M, N constitute the membrane sector of the complex.

Its subcellular location is the cell inner membrane. It catalyses the reaction a quinone + NADH + 5 H(+)(in) = a quinol + NAD(+) + 4 H(+)(out). NDH-1 shuttles electrons from NADH, via FMN and iron-sulfur (Fe-S) centers, to quinones in the respiratory chain. The immediate electron acceptor for the enzyme in this species is believed to be ubiquinone. Couples the redox reaction to proton translocation (for every two electrons transferred, four hydrogen ions are translocated across the cytoplasmic membrane), and thus conserves the redox energy in a proton gradient. This subunit may bind ubiquinone. The protein is NADH-quinone oxidoreductase subunit H of Burkholderia thailandensis (strain ATCC 700388 / DSM 13276 / CCUG 48851 / CIP 106301 / E264).